Consider the following 536-residue polypeptide: Quinate permease (536 aa).

The Cytoplasmic segment spans residues 1 to 26 (MTLLALKEDRPTPKAVYNWRVYTCAA). Residues 27–47 (IASFASCMIGYDSAFIGTTLA) form a helical membrane-spanning segment. Over 48 to 74 (LPSFKKEFDFASYTPGALALLQSNIVS) the chain is Extracellular. The chain crosses the membrane as a helical span at residues 75 to 95 (VYQAGAFFGSLFAFATSYFLG). Residues 96–98 (RRK) are Cytoplasmic-facing. Residues 99–119 (SLIAFSVVFIIGAAIMLAADG) traverse the membrane as a helical segment. At 120–131 (QGRGIAPIIAGR) the chain is on the extracellular side. The chain crosses the membrane as a helical span at residues 132 to 152 (VLAGIGVGGASNMVPIYISEL). At 153–160 (APPAVRGR) the chain is on the cytoplasmic side. The helical transmembrane segment at 161–181 (LVGIYELGWQIGGLVGFWINY) threads the bilayer. Over 182-195 (GVNTTMAPTRSQWL) the chain is Extracellular. Asn184 is a glycosylation site (N-linked (GlcNAc...) asparagine). The helical transmembrane segment at 196–216 (IPFAVQLIPAGLLFLGSFWIP) threads the bilayer. Topologically, residues 217–285 (ESPRWLFANG…SLKQRKVQWR (69 aa)) are cytoplasmic. A helical transmembrane segment spans residues 286–306 (FFLGGMLFLWQNGSGINAINY). Topologically, residues 307–327 (YSPTVFRSIGITGTNTGFLTT) are extracellular. Residues 328–349 (GIFGVVKMVLTIVWLLWLVDLV) traverse the membrane as a helical segment. At 350 to 352 (GRR) the chain is on the cytoplasmic side. A helical membrane pass occupies residues 353-373 (RMLFIGATGGSLCMWFIGAYI). The Extracellular segment spans residues 374–389 (KIAGPGSTKAEDAKLT). Residues 390-410 (SGGIAAIFFFYLWTAFYTPSW) form a helical membrane-spanning segment. The Cytoplasmic segment spans residues 411–435 (NGTPWVINSEMFDQNTRSLGQASAA). A helical transmembrane segment spans residues 436–456 (ANNWFWNFIISRFTPQMFIKM). Residues 457-458 (EY) lie on the Extracellular side of the membrane. A helical membrane pass occupies residues 459 to 479 (GVYFFFASLMLLSIVFIYFFI). The Cytoplasmic portion of the chain corresponds to 480–536 (PETKSIPLEAMDRLFEIKPVHNANKILMAELNFDRNPEREESSLDEKDRVTQTENAV). The segment covering 516-530 (PEREESSLDEKDRVT) has biased composition (basic and acidic residues). The tract at residues 516–536 (PEREESSLDEKDRVTQTENAV) is disordered.

Belongs to the major facilitator superfamily. Sugar transporter (TC 2.A.1.1) family.

The protein resides in the membrane. The sequence is that of Quinate permease (qa-y) from Neurospora terricola.